The primary structure comprises 471 residues: UDP-N-acetylmuramate--L-alanine ligase (471 aa).

114-120 (GTHGKTT) lines the ATP pocket.

Belongs to the MurCDEF family.

It localises to the cytoplasm. The enzyme catalyses UDP-N-acetyl-alpha-D-muramate + L-alanine + ATP = UDP-N-acetyl-alpha-D-muramoyl-L-alanine + ADP + phosphate + H(+). It participates in cell wall biogenesis; peptidoglycan biosynthesis. Its function is as follows. Cell wall formation. The polypeptide is UDP-N-acetylmuramate--L-alanine ligase (Chlorobaculum parvum (strain DSM 263 / NCIMB 8327) (Chlorobium vibrioforme subsp. thiosulfatophilum)).